A 170-amino-acid polypeptide reads, in one-letter code: Crossover junction endodeoxyribonuclease RuvC (170 aa).

Catalysis depends on residues Asp-11, Glu-71, and Asp-143. Residues Asp-11, Glu-71, and Asp-143 each coordinate Mg(2+).

The protein belongs to the RuvC family. As to quaternary structure, homodimer which binds Holliday junction (HJ) DNA. The HJ becomes 2-fold symmetrical on binding to RuvC with unstacked arms; it has a different conformation from HJ DNA in complex with RuvA. In the full resolvosome a probable DNA-RuvA(4)-RuvB(12)-RuvC(2) complex forms which resolves the HJ. Mg(2+) is required as a cofactor.

It localises to the cytoplasm. It carries out the reaction Endonucleolytic cleavage at a junction such as a reciprocal single-stranded crossover between two homologous DNA duplexes (Holliday junction).. Functionally, the RuvA-RuvB-RuvC complex processes Holliday junction (HJ) DNA during genetic recombination and DNA repair. Endonuclease that resolves HJ intermediates. Cleaves cruciform DNA by making single-stranded nicks across the HJ at symmetrical positions within the homologous arms, yielding a 5'-phosphate and a 3'-hydroxyl group; requires a central core of homology in the junction. The consensus cleavage sequence is 5'-(A/T)TT(C/G)-3'. Cleavage occurs on the 3'-side of the TT dinucleotide at the point of strand exchange. HJ branch migration catalyzed by RuvA-RuvB allows RuvC to scan DNA until it finds its consensus sequence, where it cleaves and resolves the cruciform DNA. This is Crossover junction endodeoxyribonuclease RuvC from Rhizobium meliloti (strain 1021) (Ensifer meliloti).